The chain runs to 393 residues: NADH-quinone oxidoreductase subunit D (393 aa).

Belongs to the complex I 49 kDa subunit family. As to quaternary structure, NDH-1 is composed of 14 different subunits. Subunits NuoB, C, D, E, F, and G constitute the peripheral sector of the complex.

The protein resides in the cell inner membrane. The enzyme catalyses a quinone + NADH + 5 H(+)(in) = a quinol + NAD(+) + 4 H(+)(out). NDH-1 shuttles electrons from NADH, via FMN and iron-sulfur (Fe-S) centers, to quinones in the respiratory chain. The immediate electron acceptor for the enzyme in this species is believed to be ubiquinone. Couples the redox reaction to proton translocation (for every two electrons transferred, four hydrogen ions are translocated across the cytoplasmic membrane), and thus conserves the redox energy in a proton gradient. The polypeptide is NADH-quinone oxidoreductase subunit D (Ehrlichia canis (strain Jake)).